The chain runs to 140 residues: Putative nickel-responsive regulator 3 (140 aa).

The Ni(2+) site is built by histidine 81, histidine 92, histidine 94, and cysteine 100.

Belongs to the transcriptional regulatory CopG/NikR family. The cofactor is Ni(2+).

Its function is as follows. Transcriptional regulator. This Methanosarcina acetivorans (strain ATCC 35395 / DSM 2834 / JCM 12185 / C2A) protein is Putative nickel-responsive regulator 3.